Here is a 147-residue protein sequence, read N- to C-terminus: Lysozyme C, tracheal isozyme (147 aa).

A signal peptide spans 1–18 (MKALLILGLLLLSVAVQG). In terms of domain architecture, C-type lysozyme spans 19 to 147 (KTFKRCELAK…LTSYVKGCGV (129 aa)). Cystine bridges form between Cys24–Cys145, Cys48–Cys133, Cys83–Cys99, and Cys95–Cys113. Active-site residues include Glu53 and Asp71.

The protein belongs to the glycosyl hydrolase 22 family. Monomer. As to expression, trachea.

It carries out the reaction Hydrolysis of (1-&gt;4)-beta-linkages between N-acetylmuramic acid and N-acetyl-D-glucosamine residues in a peptidoglycan and between N-acetyl-D-glucosamine residues in chitodextrins.. Lysozymes have primarily a bacteriolytic function; those in tissues and body fluids are associated with the monocyte-macrophage system and enhance the activity of immunoagents. The protein is Lysozyme C, tracheal isozyme of Bos taurus (Bovine).